The chain runs to 212 residues: Large ribosomal subunit protein uL3 (212 aa).

The disordered stretch occupies residues 136–155 (THGNSLSHRSNGSIGQNQTP). At Gln-153 the chain carries N5-methylglutamine.

The protein belongs to the universal ribosomal protein uL3 family. In terms of assembly, part of the 50S ribosomal subunit. Forms a cluster with proteins L14 and L19. In terms of processing, methylated by PrmB.

Functionally, one of the primary rRNA binding proteins, it binds directly near the 3'-end of the 23S rRNA, where it nucleates assembly of the 50S subunit. This chain is Large ribosomal subunit protein uL3, found in Shewanella baltica (strain OS223).